The sequence spans 362 residues: 3-dehydroquinate synthase (362 aa).

Residues 71-76, 105-109, 129-130, K142, K151, and 169-172 contribute to the NAD(+) site; these read DGEQYK, GVIGD, TT, and CLST. 3 residues coordinate Zn(2+): E184, H247, and H264.

It belongs to the sugar phosphate cyclases superfamily. Dehydroquinate synthase family. Requires Co(2+) as cofactor. The cofactor is Zn(2+). NAD(+) is required as a cofactor.

The protein resides in the cytoplasm. The catalysed reaction is 7-phospho-2-dehydro-3-deoxy-D-arabino-heptonate = 3-dehydroquinate + phosphate. The protein operates within metabolic intermediate biosynthesis; chorismate biosynthesis; chorismate from D-erythrose 4-phosphate and phosphoenolpyruvate: step 2/7. In terms of biological role, catalyzes the conversion of 3-deoxy-D-arabino-heptulosonate 7-phosphate (DAHP) to dehydroquinate (DHQ). This is 3-dehydroquinate synthase from Vibrio atlanticus (strain LGP32) (Vibrio splendidus (strain Mel32)).